A 165-amino-acid chain; its full sequence is UPF0669 protein v1g209471 (165 aa).

Residues methionine 1–cysteine 23 form the signal peptide. Residue asparagine 38 is glycosylated (N-linked (GlcNAc...) asparagine).

Belongs to the UPF0669 family.

It localises to the secreted. This chain is UPF0669 protein v1g209471, found in Nematostella vectensis (Starlet sea anemone).